Reading from the N-terminus, the 337-residue chain is Glyceraldehyde-3-phosphate dehydrogenase (337 aa).

Residues 12-13 (RI), aspartate 34, and arginine 79 contribute to the NAD(+) site. D-glyceraldehyde 3-phosphate is bound by residues 150–152 (SCT), threonine 181, 210–211 (TG), and arginine 233. Cysteine 151 functions as the Nucleophile in the catalytic mechanism. Asparagine 315 provides a ligand contact to NAD(+).

Belongs to the glyceraldehyde-3-phosphate dehydrogenase family. As to quaternary structure, homotetramer.

It is found in the cytoplasm. The catalysed reaction is D-glyceraldehyde 3-phosphate + phosphate + NAD(+) = (2R)-3-phospho-glyceroyl phosphate + NADH + H(+). Its pathway is carbohydrate degradation; glycolysis; pyruvate from D-glyceraldehyde 3-phosphate: step 1/5. This chain is Glyceraldehyde-3-phosphate dehydrogenase (GPD), found in Coccidioides posadasii (strain C735) (Valley fever fungus).